A 367-amino-acid chain; its full sequence is Aminomethyltransferase (367 aa).

This sequence belongs to the GcvT family. The glycine cleavage system is composed of four proteins: P, T, L and H.

The enzyme catalyses N(6)-[(R)-S(8)-aminomethyldihydrolipoyl]-L-lysyl-[protein] + (6S)-5,6,7,8-tetrahydrofolate = N(6)-[(R)-dihydrolipoyl]-L-lysyl-[protein] + (6R)-5,10-methylene-5,6,7,8-tetrahydrofolate + NH4(+). Its function is as follows. The glycine cleavage system catalyzes the degradation of glycine. The polypeptide is Aminomethyltransferase (Parasynechococcus marenigrum (strain WH8102)).